A 170-amino-acid polypeptide reads, in one-letter code: Crossover junction endodeoxyribonuclease RuvC (170 aa).

Residues Asp-12, Glu-72, and Asp-144 contribute to the active site. Asp-12, Glu-72, and Asp-144 together coordinate Mg(2+).

The protein belongs to the RuvC family. In terms of assembly, homodimer which binds Holliday junction (HJ) DNA. The HJ becomes 2-fold symmetrical on binding to RuvC with unstacked arms; it has a different conformation from HJ DNA in complex with RuvA. In the full resolvosome a probable DNA-RuvA(4)-RuvB(12)-RuvC(2) complex forms which resolves the HJ. Mg(2+) is required as a cofactor.

It localises to the cytoplasm. It catalyses the reaction Endonucleolytic cleavage at a junction such as a reciprocal single-stranded crossover between two homologous DNA duplexes (Holliday junction).. Functionally, the RuvA-RuvB-RuvC complex processes Holliday junction (HJ) DNA during genetic recombination and DNA repair. Endonuclease that resolves HJ intermediates. Cleaves cruciform DNA by making single-stranded nicks across the HJ at symmetrical positions within the homologous arms, yielding a 5'-phosphate and a 3'-hydroxyl group; requires a central core of homology in the junction. The consensus cleavage sequence is 5'-(A/T)TT(C/G)-3'. Cleavage occurs on the 3'-side of the TT dinucleotide at the point of strand exchange. HJ branch migration catalyzed by RuvA-RuvB allows RuvC to scan DNA until it finds its consensus sequence, where it cleaves and resolves the cruciform DNA. The sequence is that of Crossover junction endodeoxyribonuclease RuvC from Nitrobacter hamburgensis (strain DSM 10229 / NCIMB 13809 / X14).